We begin with the raw amino-acid sequence, 508 residues long: Phosphoglycerate kinase A (508 aa).

(2R)-3-phosphoglycerate contacts are provided by Val32, Asp33, Phe34, Asn35, Arg48, Ser70, His71, Gly73, Arg74, Arg224, His260, and Arg261. Residues Gly306 and Ala307 each contribute to the ADP site. Gly306 lines the CDP pocket. Residues Ala307 and Lys308 each coordinate AMP. Position 307 (Ala307) interacts with ATP. Ala307 lines the Mg(2+) pocket. (2R)-3-phosphoglycerate is bound at residue Lys308. Glu311 contacts CDP. Glu311 provides a ligand contact to Mg(2+). Residues Lys312 and Gly330 each contribute to the ADP site. Residue Lys312 coordinates AMP. Lys312 is an ATP binding site. A CDP-binding site is contributed by Gly330. Positions 331 and 403 each coordinate AMP. The ATP site is built by Ala331 and Ala403. Positions 403 and 427 each coordinate ADP. CDP contacts are provided by Gly428 and Phe433. Phe433, Glu434, Glu466, and Ser467 together coordinate ADP. Glu434 provides a ligand contact to AMP. Glu434, Glu466, and Ser467 together coordinate ATP. Position 466 (Glu466) interacts with Mg(2+).

The protein belongs to the phosphoglycerate kinase family. In terms of assembly, monomer. Requires Mg(2+) as cofactor.

The enzyme catalyses (2R)-3-phosphoglycerate + ATP = (2R)-3-phospho-glyceroyl phosphate + ADP. It participates in carbohydrate degradation; glycolysis; pyruvate from D-glyceraldehyde 3-phosphate: step 2/5. The protein is Phosphoglycerate kinase A of Trypanosoma brucei brucei.